We begin with the raw amino-acid sequence, 392 residues long: Nicotinate phosphoribosyltransferase (392 aa).

Histidine 214 is modified (phosphohistidine; by autocatalysis).

This sequence belongs to the NAPRTase family. Transiently phosphorylated on a His residue during the reaction cycle. Phosphorylation strongly increases the affinity for substrates and increases the rate of nicotinate D-ribonucleotide production. Dephosphorylation regenerates the low-affinity form of the enzyme, leading to product release.

It carries out the reaction nicotinate + 5-phospho-alpha-D-ribose 1-diphosphate + ATP + H2O = nicotinate beta-D-ribonucleotide + ADP + phosphate + diphosphate. It participates in cofactor biosynthesis; NAD(+) biosynthesis; nicotinate D-ribonucleotide from nicotinate: step 1/1. In terms of biological role, catalyzes the synthesis of beta-nicotinate D-ribonucleotide from nicotinate and 5-phospho-D-ribose 1-phosphate at the expense of ATP. The sequence is that of Nicotinate phosphoribosyltransferase from Xanthomonas euvesicatoria pv. vesicatoria (strain 85-10) (Xanthomonas campestris pv. vesicatoria).